A 224-amino-acid chain; its full sequence is UPF0758 protein HEAR2468 (224 aa).

The MPN domain occupies 102-224 (ALNSPQAVKQ…VYSFAEQGQL (123 aa)). The Zn(2+) site is built by His-173, His-175, and Asp-186. Residues 173 to 186 (HNHPSGTPEPSAAD) carry the JAMM motif motif.

This sequence belongs to the UPF0758 family.

The protein is UPF0758 protein HEAR2468 of Herminiimonas arsenicoxydans.